Consider the following 280-residue polypeptide: Ribosomal RNA small subunit methyltransferase A (280 aa).

S-adenosyl-L-methionine contacts are provided by His-15, Leu-17, Gly-42, Glu-64, Asp-89, and Asn-109.

It belongs to the class I-like SAM-binding methyltransferase superfamily. rRNA adenine N(6)-methyltransferase family. RsmA subfamily.

It is found in the cytoplasm. The catalysed reaction is adenosine(1518)/adenosine(1519) in 16S rRNA + 4 S-adenosyl-L-methionine = N(6)-dimethyladenosine(1518)/N(6)-dimethyladenosine(1519) in 16S rRNA + 4 S-adenosyl-L-homocysteine + 4 H(+). Functionally, specifically dimethylates two adjacent adenosines (A1518 and A1519) in the loop of a conserved hairpin near the 3'-end of 16S rRNA in the 30S particle. May play a critical role in biogenesis of 30S subunits. The protein is Ribosomal RNA small subunit methyltransferase A of Prochlorococcus marinus (strain MIT 9303).